Consider the following 260-residue polypeptide: MDDYAVLSDTELAAVLRQYNIPHGPILGSTRKLYEKKIFEYETQRRRLSPPSSSSSSFSYRFSDLDSASVDSDMYDLPKKEDALLYQSKDYNDDYYEESYLTTRTYGEPESVGMSKSFRRPGTSLVDADDTFHHQVRDDIFSSSEEEGKDRERPIYGRDSAYQSIAEYRPISNVSRSSLGLSYYPRSSTSSVSSSSSSPSSWLTRRAIRPEKQAPTAALGQDRQVPLWGQLLLFLAFATFLLFVYYSIQAQEGNPFWMDP.

Residue Met1 is modified to N-acetylmethionine. The region spanning 1-45 (MDDYAVLSDTELAAVLRQYNIPHGPILGSTRKLYEKKIFEYETQR) is the LEM domain. Residues Ser8 and Ser29 each carry the phosphoserine modification. The interval 46 to 224 (RRLSPPSSSS…PTAALGQDRQ (179 aa)) is interaction with F-actin. Ser49 is modified (phosphoserine; by PKA). Residues Ser54, Ser69, Ser72, Ser88, Ser99, Ser142, Ser143, and Ser144 each carry the phosphoserine modification. Tyr162 is modified (phosphotyrosine). The segment at 169-188 (RPISNVSRSSLGLSYYPRSS) is interaction with CTNNB1. 3 positions are modified to phosphoserine: Ser172, Ser175, and Ser177. The tract at residues 184–206 (YPRSSTSSVSSSSSSPSSWLTRR) is disordered. Over residues 187-201 (SSTSSVSSSSSSPSS) the composition is skewed to low complexity. A helical membrane pass occupies residues 225-245 (VPLWGQLLLFLAFATFLLFVY).

In terms of assembly, interacts with lamins A and C, BANF1, GMCL, BCLAF1 and YTHDC1/YT521. Interacts with TMEM43; the interaction retains emerin in the inner nuclear membrane. Interacts with ACTB, SPTAN1, F-actin, CTNNB1 and beta-tubulin. Interacts with SUN1 and SUN2. Interacts with TMEM201. Interacts with NEMP1.

The protein localises to the nucleus inner membrane. The protein resides in the nucleus outer membrane. In terms of biological role, stabilizes and promotes the formation of a nuclear actin cortical network. Stimulates actin polymerization in vitro by binding and stabilizing the pointed end of growing filaments. Inhibits beta-catenin activity by preventing its accumulation in the nucleus. Acts by influencing the nuclear accumulation of beta-catenin through a CRM1-dependent export pathway. Links centrosomes to the nuclear envelope via a microtubule association. Required for proper localization of non-farnesylated prelamin-A/C. Together with NEMP1, contributes to nuclear envelope stiffness in germ cells. This is Emerin (Emd) from Rattus norvegicus (Rat).